The following is a 236-amino-acid chain: MKKKLYEGSSKILYSAEEDFLLIMAFSDKAILETGKTVDISGKGVLNNNISSFLMDKLEMIGIANHFIEKINMREQLIQYVEVFPIQVIISSVACGRFVKEFGLDEGYVFDKPIMDFKVRSREFKYPIVNEYQILNFGWLTRDEITAVKEQALHIYDFLSGLFIGVGIRLVECKLEFGRVFNGEESIIMLTDEISPDNCRLWHINSNEKLGFELLENEPSKVFESYQLIAERLKEK.

Belongs to the SAICAR synthetase family.

The enzyme catalyses 5-amino-1-(5-phospho-D-ribosyl)imidazole-4-carboxylate + L-aspartate + ATP = (2S)-2-[5-amino-1-(5-phospho-beta-D-ribosyl)imidazole-4-carboxamido]succinate + ADP + phosphate + 2 H(+). Its pathway is purine metabolism; IMP biosynthesis via de novo pathway; 5-amino-1-(5-phospho-D-ribosyl)imidazole-4-carboxamide from 5-amino-1-(5-phospho-D-ribosyl)imidazole-4-carboxylate: step 1/2. This is Phosphoribosylaminoimidazole-succinocarboxamide synthase from Rickettsia canadensis (strain McKiel).